Reading from the N-terminus, the 316-residue chain is UDP-N-acetyl-2-amino-2-deoxy-D-glucuronate oxidase (316 aa).

NAD(+) contacts are provided by residues 11-13, 32-37, Glu-55, 81-84, 101-102, Gln-130, and 171-172; these read GYI, YDINDS, NYLH, EK, and WK.

Belongs to the Gfo/Idh/MocA family. Homotetramer.

The enzyme catalyses UDP-2-acetamido-2-deoxy-alpha-D-glucuronate + NAD(+) = UDP-2-acetamido-2-deoxy-alpha-D-ribo-hex-3-uluronate + NADH + H(+). It catalyses the reaction 2-hydroxyglutarate + NAD(+) = 2-oxoglutarate + NADH + H(+). The protein operates within bacterial outer membrane biogenesis; LPS O-antigen biosynthesis. Its function is as follows. Plays a role in the biosynthesis of B-band O antigen for serotype O5. Catalyzes the NAD-dependent oxidation of UDP-N-acetylglucosaminuronic acid (UDP-D-GlcNAcA) to UDP-2-acetamido-2-deoxy-3-oxo-D-glucuronic acid (UDP-3-oxo-D-GlcNAcA). Cannot use UDP-GlcNAc or UDP-GalNAc as the nucleotide sugar substrate, and can use only poorly UDP-D-glucuronic acid (UDP-GlcA). Undergoes an NAD(+) recycling mechanism using 2-oxoglutarate as an oxidant. The sequence is that of UDP-N-acetyl-2-amino-2-deoxy-D-glucuronate oxidase from Pseudomonas aeruginosa (strain ATCC 15692 / DSM 22644 / CIP 104116 / JCM 14847 / LMG 12228 / 1C / PRS 101 / PAO1).